The chain runs to 1100 residues: Guanylate cyclase 2G (1100 aa).

Residues M1 to A43 form the signal peptide. Topologically, residues A44–A481 are extracellular. N-linked (GlcNAc...) asparagine glycosylation is found at N55, N85, N94, N418, and N443. A helical membrane pass occupies residues V482 to L502. The Cytoplasmic portion of the chain corresponds to W503–L1100. Residues S549–L826 form the Protein kinase domain. The Guanylate cyclase domain maps to T901 to E1031.

Belongs to the adenylyl cyclase class-4/guanylyl cyclase family. In terms of assembly, homooligomer. May interact with NPR1/GC-A. In terms of processing, N-glycosylated. As to expression, expressed in lung, kidney and skeletal muscle. Low levels in intestine.

The protein resides in the cell membrane. It is found in the cytoplasm. It carries out the reaction GTP = 3',5'-cyclic GMP + diphosphate. This chain is Guanylate cyclase 2G (Gucy2g), found in Rattus norvegicus (Rat).